Here is a 425-residue protein sequence, read N- to C-terminus: Bifunctional phosphoribosylaminoimidazole carboxylase/phosphoribosylaminoimidazole succinocarboxamide synthetase (425 aa).

Ala-2 is modified (N-acetylalanine). Residues 2–260 (ATAVVVNIGK…WVADRVELLL (259 aa)) form an SAICAR synthetase domain region. At Tyr-22 the chain carries Phosphotyrosine. At Lys-36 the chain carries N6-acetyllysine. Residue Ser-107 is modified to Phosphoserine. Thr-238 is modified (phosphothreonine). An N6-acetyllysine modification is found at Lys-247. The tract at residues 261-266 (KSDSQC) is linker. An AIR carboxylase domain region spans residues 267–425 (RVVVLMGSTS…ADKKVRQCNL (159 aa)). Residue Ser-274 is modified to Phosphoserine. Ser-332 lines the CO2 pocket.

This sequence in the N-terminal section; belongs to the SAICAR synthetase family. The protein in the C-terminal section; belongs to the AIR carboxylase family. Class II subfamily. In terms of assembly, homooctamer.

It catalyses the reaction 5-amino-1-(5-phospho-D-ribosyl)imidazole-4-carboxylate + L-aspartate + ATP = (2S)-2-[5-amino-1-(5-phospho-beta-D-ribosyl)imidazole-4-carboxamido]succinate + ADP + phosphate + 2 H(+). It carries out the reaction 5-amino-1-(5-phospho-D-ribosyl)imidazole-4-carboxylate + H(+) = 5-amino-1-(5-phospho-beta-D-ribosyl)imidazole + CO2. It participates in purine metabolism; IMP biosynthesis via de novo pathway; 5-amino-1-(5-phospho-D-ribosyl)imidazole-4-carboxamide from 5-amino-1-(5-phospho-D-ribosyl)imidazole-4-carboxylate: step 1/2. The protein operates within purine metabolism; IMP biosynthesis via de novo pathway; 5-amino-1-(5-phospho-D-ribosyl)imidazole-4-carboxylate from 5-amino-1-(5-phospho-D-ribosyl)imidazole (carboxylase route): step 1/1. Functionally, bifunctional phosphoribosylaminoimidazole carboxylase and phosphoribosylaminoimidazole succinocarboxamide synthetase catalyzing two reactions of the de novo purine biosynthetic pathway. The sequence is that of Bifunctional phosphoribosylaminoimidazole carboxylase/phosphoribosylaminoimidazole succinocarboxamide synthetase from Mus musculus (Mouse).